The following is a 193-amino-acid chain: Xanthine phosphoribosyltransferase (193 aa).

Leu-20 and Asn-27 together coordinate xanthine. 5-phospho-alpha-D-ribose 1-diphosphate is bound at residue 129–133; sequence ANGKA. Lys-157 contacts xanthine.

The protein belongs to the purine/pyrimidine phosphoribosyltransferase family. Xpt subfamily. Homodimer.

The protein resides in the cytoplasm. It carries out the reaction XMP + diphosphate = xanthine + 5-phospho-alpha-D-ribose 1-diphosphate. It functions in the pathway purine metabolism; XMP biosynthesis via salvage pathway; XMP from xanthine: step 1/1. In terms of biological role, converts the preformed base xanthine, a product of nucleic acid breakdown, to xanthosine 5'-monophosphate (XMP), so it can be reused for RNA or DNA synthesis. This chain is Xanthine phosphoribosyltransferase, found in Bifidobacterium longum (strain NCC 2705).